Reading from the N-terminus, the 298-residue chain is ATP phosphoribosyltransferase (298 aa).

The protein belongs to the ATP phosphoribosyltransferase family. Long subfamily. It depends on Mg(2+) as a cofactor.

It localises to the cytoplasm. It carries out the reaction 1-(5-phospho-beta-D-ribosyl)-ATP + diphosphate = 5-phospho-alpha-D-ribose 1-diphosphate + ATP. Its pathway is amino-acid biosynthesis; L-histidine biosynthesis; L-histidine from 5-phospho-alpha-D-ribose 1-diphosphate: step 1/9. Its activity is regulated as follows. Feedback inhibited by histidine. In terms of biological role, catalyzes the condensation of ATP and 5-phosphoribose 1-diphosphate to form N'-(5'-phosphoribosyl)-ATP (PR-ATP). Has a crucial role in the pathway because the rate of histidine biosynthesis seems to be controlled primarily by regulation of HisG enzymatic activity. In Vibrio parahaemolyticus serotype O3:K6 (strain RIMD 2210633), this protein is ATP phosphoribosyltransferase.